We begin with the raw amino-acid sequence, 417 residues long: Serine hydroxymethyltransferase (417 aa).

(6S)-5,6,7,8-tetrahydrofolate is bound by residues leucine 121 and glycine 125 to leucine 127. Residue lysine 230 is modified to N6-(pyridoxal phosphate)lysine. Serine 355–phenylalanine 357 contacts (6S)-5,6,7,8-tetrahydrofolate.

It belongs to the SHMT family. As to quaternary structure, homodimer. Pyridoxal 5'-phosphate serves as cofactor.

It localises to the cytoplasm. It catalyses the reaction (6R)-5,10-methylene-5,6,7,8-tetrahydrofolate + glycine + H2O = (6S)-5,6,7,8-tetrahydrofolate + L-serine. The protein operates within one-carbon metabolism; tetrahydrofolate interconversion. Its pathway is amino-acid biosynthesis; glycine biosynthesis; glycine from L-serine: step 1/1. Catalyzes the reversible interconversion of serine and glycine with tetrahydrofolate (THF) serving as the one-carbon carrier. This reaction serves as the major source of one-carbon groups required for the biosynthesis of purines, thymidylate, methionine, and other important biomolecules. Also exhibits THF-independent aldolase activity toward beta-hydroxyamino acids, producing glycine and aldehydes, via a retro-aldol mechanism. The sequence is that of Serine hydroxymethyltransferase from Ruthia magnifica subsp. Calyptogena magnifica.